Reading from the N-terminus, the 347-residue chain is Heat-inducible transcription repressor HrcA (347 aa).

This sequence belongs to the HrcA family.

Its function is as follows. Negative regulator of class I heat shock genes (grpE-dnaK-dnaJ and groELS operons). Prevents heat-shock induction of these operons. The sequence is that of Heat-inducible transcription repressor HrcA from Enterococcus faecalis (strain ATCC 700802 / V583).